A 768-amino-acid polypeptide reads, in one-letter code: MHSDITPIHTHKKYWAECFGTAPFLPTSRKEMDALGWDSCDIVLVTGDAYVDHPSFGMAIIGRLLEAQGFRVGIIAQPQWQDKTDFMSLGKPNLFFGVTSGNMDSMINRYTSDRKLRHDDAYTPNNEGGKRPDRATLVYSQRCREAYKDVPIVLGGIEASLRRVAHYDYWSDKVRRSVLLDAKADILLFGNAERALVEVAHRLAEGEEIAQMTNIRGTAVNLAAEPEGYTIIDSSRIEKPRKEAFIPPNPYEVETQCETKSEEPKAQPITIRPSRHDAATTAVRLPSFEKLQNDRILYAHASRILHLETNPYSGRALIQRHGNRELWVNQAPIPLTTEEMDYVFGLPYARVPHPKYGKAKIPAYDMIKTSVNIMRGCFGGCSFCSITEHEGRIIQNRSQESILTELEEIRDKVPGFTGTISDLGGPTANMYRLGCSDPKAEANCRRPSCVFPGICNKLNTDHKHTIDLYRAARQVKGVKKVMIASGVRYDLAIESPEYVKELVTHHVGGYLKIAPEHTEKGPLDLMMKPGMGTYDRFKEMFDKYSQEAGKKQYLIPYFISAHPGTTDEDMLNLALWLKKNNYECDQVQNFYPSPMCNATSMYYSETNPLKRVKYKQREDVPVAKGDRQRRLHKALLRYHDPANWPLIREALITMGKKYLIGDKPGCLVPAEDVDARTPAQRRKSGRHGANRFATKHTSTQPGFPGDKANAGSGKKPTRGGQSNSAPSRSGSATGGKHPQRSGANTGGKSSGGKNSPRAGGRNQPSRAR.

Residues 363 to 640 form the Radical SAM core domain; it reads AYDMIKTSVN…LHKALLRYHD (278 aa). Residues Cys377, Cys381, and Cys384 each coordinate [4Fe-4S] cluster. The tract at residues 674-768 is disordered; it reads DARTPAQRRK…GGRNQPSRAR (95 aa). Over residues 679 to 689 the composition is skewed to basic residues; that stretch reads AQRRKSGRHGA. Residues 719-731 show a composition bias toward polar residues; it reads GGQSNSAPSRSGS.

This sequence belongs to the UPF0313 family. [4Fe-4S] cluster is required as a cofactor.

The polypeptide is UPF0313 protein VV2143 (Vibrio vulnificus (strain YJ016)).